A 280-amino-acid chain; its full sequence is Mevalonyl-coenzyme A hydratase SIDH (280 aa).

The PTS1-type peroxisomal targeting signal signature appears at 278–280; sequence SKL.

It belongs to the enoyl-CoA hydratase/isomerase family.

It localises to the peroxisome. Its pathway is siderophore biosynthesis. Its function is as follows. Mevalonyl-coenzyme A hydratase; part of the gene cluster that mediates the biosynthesis of at least 11 siderophores, including beauverichelin A, dimerumic acid (DA), Na-dimethyl coprogen (NADC), eleutherazine B, ferricrocin (FC), fusarinine A, fusarinine C (FsC), metachelin A, mevalonolactone, rhodotorulic acid (RA) and tenellin. This cocktail of siderophores for iron metabolism is essential for virulence, and more specifically for the fungal virulence in penetrating through the host cuticle. Siderophore synthesis is also involved in conidial germination under iron-deficient conditions. For biosynthesis of fusarinine C, the transacylase SIDF transfers anhydromevalonyl to N(5)-hydroxyornithine. The required anhydromevalonyl-CoA moiety is derived from mevalonate by CoA ligation and dehydration catalyzed by SIDI and sidH respectively. SIDH is not essential for siderophore production, probably due to functional redundancy of this protein family, as there are 15 homologs of SIDH in B.bassiana. The chain is Mevalonyl-coenzyme A hydratase SIDH from Beauveria bassiana (strain ARSEF 2860) (White muscardine disease fungus).